The primary structure comprises 216 residues: Cytochrome c oxidase assembly protein CtaG (216 aa).

The span at Met-1–Pro-23 shows a compositional bias: low complexity. A disordered region spans residues Met-1 to Arg-24. Residues Met-1–Gly-26 are Cytoplasmic-facing. Residues Arg-27–Ala-49 traverse the membrane as a helical; Signal-anchor for type II membrane protein segment. Residues Val-50 to Ile-216 lie on the Periplasmic side of the membrane.

It belongs to the COX11/CtaG family.

Its subcellular location is the cell inner membrane. Functionally, exerts its effect at some terminal stage of cytochrome c oxidase synthesis, probably by being involved in the insertion of the copper B into subunit I. The protein is Cytochrome c oxidase assembly protein CtaG of Nitrobacter hamburgensis (strain DSM 10229 / NCIMB 13809 / X14).